Consider the following 70-residue polypeptide: Conotoxin AbVIB (70 aa).

The first 17 residues, 1 to 17 (VIIIAVLFLTACQLTTA), serve as a signal peptide directing secretion. Positions 18–41 (ETSSRGKQKHRALRSTDKNSKLTR) are excised as a propeptide. The disordered stretch occupies residues 20–41 (SSRGKQKHRALRSTDKNSKLTR). 3 disulfide bridges follow: Cys-43–Cys-57, Cys-50–Cys-61, and Cys-56–Cys-68.

It belongs to the conotoxin O1 superfamily. Expressed by the venom duct.

It is found in the secreted. In Conus abbreviatus (Abbreviated cone), this protein is Conotoxin AbVIB.